We begin with the raw amino-acid sequence, 530 residues long: Phosphoenolpyruvate carboxykinase (ATP) (530 aa).

Substrate is bound by residues Arg57, Tyr193, and Lys199. ATP-binding positions include Lys199, His218, and Gly234 to Thr242. Lys199 and His218 together coordinate Mn(2+). Asp255 provides a ligand contact to Mn(2+). Residues Glu283, Arg320, and Thr445 each coordinate ATP. A substrate-binding site is contributed by Arg320.

This sequence belongs to the phosphoenolpyruvate carboxykinase (ATP) family. The cofactor is Mn(2+).

It localises to the cytoplasm. The enzyme catalyses oxaloacetate + ATP = phosphoenolpyruvate + ADP + CO2. It participates in carbohydrate biosynthesis; gluconeogenesis. In terms of biological role, involved in the gluconeogenesis. Catalyzes the conversion of oxaloacetate (OAA) to phosphoenolpyruvate (PEP) through direct phosphoryl transfer between the nucleoside triphosphate and OAA. This Leptospira biflexa serovar Patoc (strain Patoc 1 / Ames) protein is Phosphoenolpyruvate carboxykinase (ATP).